The chain runs to 189 residues: Large ribosomal subunit protein bL9 (189 aa).

Belongs to the bacterial ribosomal protein bL9 family.

Its function is as follows. Binds to the 23S rRNA. This Brucella melitensis biotype 2 (strain ATCC 23457) protein is Large ribosomal subunit protein bL9.